Consider the following 82-residue polypeptide: Turripeptide IX-23 (82 aa).

The signal sequence occupies residues 1–23; it reads MMAKLMITVMMVLLLSLQQGADG. The propeptide occupies 24–50; that stretch reads RSERWRKNQMAASSIMRNLITARIDPP. Disulfide bonds link C53–C68, C58–C72, and C64–C79.

This sequence belongs to the Pg turripeptide superfamily. Expressed by the venom duct.

The protein localises to the secreted. The protein is Turripeptide IX-23 of Gemmula speciosa (Splendid gem-turris).